An 81-amino-acid chain; its full sequence is Cytotoxin (81 aa).

An N-terminal signal peptide occupies residues methionine 1–threonine 21. 4 disulfides stabilise this stretch: cysteine 24–cysteine 42, cysteine 35–cysteine 59, cysteine 63–cysteine 74, and cysteine 75–cysteine 80.

Belongs to the three-finger toxin family. Short-chain subfamily. Type IA cytotoxin sub-subfamily. Monomer in solution; Homodimer and oligomer in the presence of negatively charged lipids forming a pore with a size ranging between 20 and 30 Angstroms. Expressed by the venom gland.

Its subcellular location is the secreted. The protein resides in the target cell membrane. In terms of biological role, shows cytolytic activity on many different cells by forming pore in lipid membranes. In vivo, increases heart rate or kills the animal by cardiac arrest. In addition, it binds to heparin with high affinity, interacts with Kv channel-interacting protein 1 (KCNIP1) in a calcium-independent manner, and binds to integrin alpha-V/beta-3 (ITGAV/ITGB3) with moderate affinity. The sequence is that of Cytotoxin from Naja sputatrix (Malayan spitting cobra).